Consider the following 333-residue polypeptide: tRNA N6-adenosine threonylcarbamoyltransferase (333 aa).

Fe cation is bound by residues His-111 and His-115. Substrate contacts are provided by residues 134–138, Asp-167, Gly-180, Asp-184, and Asn-269; that span reads VVSGG. Position 297 (Asp-297) interacts with Fe cation.

It belongs to the KAE1 / TsaD family. Fe(2+) serves as cofactor.

It is found in the cytoplasm. The catalysed reaction is L-threonylcarbamoyladenylate + adenosine(37) in tRNA = N(6)-L-threonylcarbamoyladenosine(37) in tRNA + AMP + H(+). In terms of biological role, required for the formation of a threonylcarbamoyl group on adenosine at position 37 (t(6)A37) in tRNAs that read codons beginning with adenine. Is involved in the transfer of the threonylcarbamoyl moiety of threonylcarbamoyl-AMP (TC-AMP) to the N6 group of A37, together with TsaE and TsaB. TsaD likely plays a direct catalytic role in this reaction. The sequence is that of tRNA N6-adenosine threonylcarbamoyltransferase from Carboxydothermus hydrogenoformans (strain ATCC BAA-161 / DSM 6008 / Z-2901).